The sequence spans 584 residues: HERV-H_2q24.3 provirus ancestral Env polyprotein (584 aa).

The N-terminal stretch at 1–35 (MIFAGKAPSNTSTLMKFYSLLLYSLLFSFPFLCHP) is a signal peptide. Residues 36–523 (LPLPSYLHHT…WALSNWMSWV (488 aa)) lie on the Extracellular side of the membrane. Residue N47 is glycosylated (N-linked (GlcNAc...) asparagine). Residues 64-67 (CWLC) carry the CXXC motif. 6 N-linked (GlcNAc...) asparagine glycosylation sites follow: N199, N222, N265, N283, N352, and N370. The interval 388 to 408 (VIPLIPLMVGLGLSASTVALG) is fusion peptide. The CKS-17 signature appears at 454 to 470 (LQNRRGLDLLTAEKGGL). A disulfide bridge links C471 with C478. The short motif at 471-479 (CIFLNEECC) is the CX6CC element. Residue N483 is glycosylated (N-linked (GlcNAc...) asparagine). The chain crosses the membrane as a helical span at residues 524-544 (LPIVSPLIPIFLLLLFGPCIF). At 545-584 (RLVSQFIQNRIQAITNHSIRQMFLLTSPQYHPLPQDLPSA) the chain is on the cytoplasmic side.

The protein belongs to the gamma type-C retroviral envelope protein family. HERV class-I H env subfamily. As to quaternary structure, the surface (SU) and transmembrane (TM) proteins form a heterodimer. SU and TM are attached by noncovalent interactions or by a labile interchain disulfide bond. Specific enzymatic cleavages in vivo yield the mature SU and TM proteins. In terms of processing, the CXXC motif is highly conserved across a broad range of retroviral envelope proteins. It is thought to participate in the formation of a labile disulfide bond possibly with the CX6CC motif present in the transmembrane protein. Isomerization of the intersubunit disulfide bond to an SU intrachain disulfide bond is thought to occur upon receptor recognition in order to allow membrane fusion. Low expression in skin and testis. No expression in several cell lines.

The protein resides in the virion. It is found in the cell membrane. Functionally, retroviral envelope proteins mediate receptor recognition and membrane fusion during early infection. Endogenous envelope proteins may have kept, lost or modified their original function during evolution. This endogenous envelope protein has lost its original fusogenic properties but has immunosuppressive properties in vivo. In terms of biological role, SU mediates receptor recognition. TM anchors the envelope heterodimer to the viral membrane through one transmembrane domain. The other hydrophobic domain, called fusion peptide, mediates fusion of the viral membrane with the target cell membrane. The sequence is that of HERV-H_2q24.3 provirus ancestral Env polyprotein from Homo sapiens (Human).